A 1579-amino-acid polypeptide reads, in one-letter code: MNSQPQARSPFFQRPQIQPPRAAIPNSSPSIRPGVQTPTAVYQANQHIMMVNHLPMPYPVTQGHQYCIPQYRHSGPPYVGPPQQYPVQPPGPGPFYPGPGPGDFANAYGTPFYPSQPVYQSAPIIVPTQQQPPPAKREKKTIRIRDPNQGGKDITEEIMSGGGSRNPTPPIGRPASTPTPPQQLPSQVPEHSPVVYGTVESAHLAASTPVTAASDQKQEEKPKPDPVFQSPSTVLRLVLSGEKKEQAGQMPETAAGEPTPEPPRTSSPTSLPPLARSSLPSPMSAALSSQPLFTAEDKCELPSSKEEDAPPVPSPTSCTAASGPSLTDNSDICKKPCSVAPHDSQLISSTILINEMNGVGEKLSAKENTVGMLRQEVLPLTLELEILEHPQEELKVECTPTPIAPSMLPAFSPAPPTPPTSPPCPPVVLSAAIARSPAVATEVQRVADEGESLRTCLSKDAKEMQDKAESESDGQAEETADPQSLHSGRSPAPVQTATTAPKSWKKTKEQTRTPDEVLEAEAEPKAEEELAVDSVLEPEQEKMSQGFPSERDPSALKRGKAEEGNGEEAEPVRNGAESASEGEGGDGNSGSADSSADGLTFPFKAESWKPADTEGKKQYDREFLLDIQFMPACIQKPEGLPPISDVVLDKINQPRLSMRTLDPRILPRGPDFTPAFADFPRQTPGGRGVPLLNVGPRRSQPGQRREPRKIITVSVKEDVHLRKAENAWKPSQKRDSHADDPESIKTQELFRKVRSILNKLTPQMFNQLMKQVSALTVDTEERLKGVIDLVFEKAIDEPSFSVAYANMCRCLVTLKVPMADKPGNTVNFRKLLLNRCQKEFEKDKADDDVFEKKQKELEAASAPEERTRLHDELEEAKDKARRRSIGNIKFIGELFKLKMLTEAIMHDCVVKLLKNHDEESLECLCRLLTTIGKDLDFEKAKPRMDQYFNQMEKIVKERKTSSRIRFMLQDVIDLRLCNWVSRRADQGPKTIEQIHKEAKIEEQEEQRKVQQLMTKEKRRPGVQRVDEGGWNTVQGAKNSRVLDPSKFLKITKPTIDEKIQLVPKAQLGSWGKGSSGGAKASESDALRSSASSLNRFSPLQPPAPSGSPSATPLEFDSRRALTSRGSMGREKSDKPIPAGTARPNTFLRGSSKDLLDNQSQEEQRREMLETVKQLTGGLDAERASTEADRSKTRELAKSEMCAVPAPDKPALSEEEVERKSKSIIDEFLHINDFKEATQCIEELSAQGPLHVFVKVGVEFTLERSQITRDHMGHLLYQLVQSEKLSKQDFFKGFSETLELADDMAIDIPHIWLYLAELVTPMLKEGGISMRELIVEFSKPLLPVGRAGVLLSEILHLLCRQMSHKKVGALWREADLSWKDFLPEGEDVHHFLLEQKLDFTESEGPCSSEALSKKELSAEELSQRLEKLIMEEKADDERIFDWVEANLDESQMSSPTFLRALMTAVCKAAIIADCSTFRVDTAVIKQRVPILLKYLDSDTEKELQALYALQASIVKLDQPANLLRMFFDCLYDEEVISEDAFYKWESSKDPAEQAGKGVALKSVTAFFTWLREAEEESEDN.

Disordered stretches follow at residues 1–35 (MNSQ…RPGV) and 128–326 (TQQQ…GPSL). Over residues 10 to 25 (PFFQRPQIQPPRAAIP) the composition is skewed to low complexity. A compositionally biased stretch (polar residues) spans 26-35 (NSSPSIRPGV). The interval 134–162 (PAKREKKTIRIRDPNQGGKDITEEIMSGG) is PABPC1-binding. Pro residues predominate over residues 167–183 (PTPPIGRPASTPTPPQQ). Residue T168 is modified to Phosphothreonine. 3 positions are modified to phosphoserine: S230, S232, and S267. Over residues 266 to 292 (SSPTSLPPLARSSLPSPMSAALSSQPL) the composition is skewed to low complexity. Basic and acidic residues predominate over residues 295 to 308 (AEDKCELPSSKEED). A compositionally biased stretch (polar residues) spans 315 to 326 (PTSCTAASGPSL). A phosphoserine mark is found at S436, S470, S472, and S490. The segment covering 454–470 (RTCLSKDAKEMQDKAES) has biased composition (basic and acidic residues). Disordered regions lie at residues 454–615 (RTCL…DTEG), 681–706 (RQTP…QRRE), and 724–744 (AENA…PESI). Positions 471-480 (ESDGQAEETA) are enriched in acidic residues. Residues 481–501 (DPQSLHSGRSPAPVQTATTAP) show a composition bias toward polar residues. 2 stretches are compositionally biased toward basic and acidic residues: residues 506 to 515 (KTKEQTRTPD) and 549 to 563 (SERD…KAEE). Over residues 589–598 (SGSADSSADG) the composition is skewed to low complexity. Positions 606–615 (ESWKPADTEG) are enriched in basic and acidic residues. The tract at residues 614 to 625 (EGKKQYDREFLL) is EIF4E-binding. An eIF3/EIF4A-binding region spans residues 694–1014 (VGPRRSQPGQ…EQRKVQQLMT (321 aa)). 5 HEAT repeats span residues 740-778 (DPES…LTVD), 779-826 (TEER…GNTV), 827-900 (NFRK…LKML), 901-939 (TEAI…DFEK), and 940-979 (AKPR…LCNW). An MIF4G domain is found at 750-978 (FRKVRSILNK…QDVIDLRLCN (229 aa)). Residues 855–871 (KELEAASAPEERTRLHD) show a composition bias toward basic and acidic residues. Residues 855–875 (KELEAASAPEERTRLHDELEE) form a disordered region. A coiled-coil region spans residues 989 to 1018 (KTIEQIHKEAKIEEQEEQRKVQQLMTKEKR). 2 disordered regions span residues 1009 to 1037 (VQQL…QGAK) and 1067 to 1214 (LGSW…LSEE). The segment covering 1086-1098 (LRSSASSLNRFSP) has biased composition (low complexity). At S1150 the chain carries Phosphoserine; by CaMK1. 2 stretches are compositionally biased toward basic and acidic residues: residues 1150–1169 (SSKD…EMLE) and 1179–1197 (DAER…ELAK). The stretch at 1154–1176 (LLDNQSQEEQRREMLETVKQLTG) forms a coiled coil. S1212 carries the phosphoserine modification. One can recognise an MI domain in the interval 1215 to 1337 (EVERKSKSII…SMRELIVEFS (123 aa)). The stretch at 1406-1438 (SSEALSKKELSAEELSQRLEKLIMEEKADDERI) forms a coiled coil. The 170-residue stretch at 1410 to 1579 (LSKKELSAEE…REAEEESEDN (170 aa)) folds into the W2 domain. The EIF4A-binding stretch occupies residues 1427 to 1579 (LIMEEKADDE…REAEEESEDN (153 aa)). The tract at residues 1565–1579 (FFTWLREAEEESEDN) is necessary but not sufficient for MKNK1-binding.

The protein belongs to the eukaryotic initiation factor 4G family. In terms of assembly, interacts with EIF4A, EIF4E, eIF3 and PABPC1. Part of a complex with EIF4E. eIF4F is a multi-subunit complex, the composition of which varies with external and internal environmental conditions. It is composed of at least EIF4A, EIF4E and EIF4G1/EIF4G3. EIF4G1/EIF4G3 interacts through its C-terminus with the serine/threonine kinases MKNK1, and with MKNK2. Appears to act as a scaffold protein, holding these enzymes in place to phosphorylate eIF4E. Non-phosphorylated EIF4EBP1 competes with EIF4G1/EIFG3 to interact with EIF4E; insulin stimulated MAP-kinase (MAPK1 and MAPK3) phosphorylation of EIF4EBP1 causes dissociation of the complex allowing EIF4G1/EIF4G3 to bind and consequent initiation of translation. EIF4G1/EIF4G3 interacts with PABPC1 to bring about circularization of the mRNA. Interacts with FXR1; promoting translation of FXR1 target mRNAs.

Its function is as follows. Component of the protein complex eIF4F, which is involved in the recognition of the mRNA cap, ATP-dependent unwinding of 5'-terminal secondary structure and recruitment of mRNA to the ribosome. Functional homolog of EIF4G1. This chain is Eukaryotic translation initiation factor 4 gamma 3 (Eif4g3), found in Mus musculus (Mouse).